Reading from the N-terminus, the 520-residue chain is Peptide chain release factor 3 (520 aa).

The tr-type G domain occupies 8 to 277 (ESRKTFAIIS…HAPMPNARQT (270 aa)). GTP contacts are provided by residues 17 to 24 (SHPDAGKT), 85 to 89 (DTPGH), and 139 to 142 (NKLD).

Belongs to the TRAFAC class translation factor GTPase superfamily. Classic translation factor GTPase family. PrfC subfamily.

It localises to the cytoplasm. Functionally, increases the formation of ribosomal termination complexes and stimulates activities of RF-1 and RF-2. It binds guanine nucleotides and has strong preference for UGA stop codons. It may interact directly with the ribosome. The stimulation of RF-1 and RF-2 is significantly reduced by GTP and GDP, but not by GMP. In Staphylococcus saprophyticus subsp. saprophyticus (strain ATCC 15305 / DSM 20229 / NCIMB 8711 / NCTC 7292 / S-41), this protein is Peptide chain release factor 3.